We begin with the raw amino-acid sequence, 330 residues long: GDP-mannose transporter (330 aa).

The Cytoplasmic portion of the chain corresponds to 1 to 13 (MSQLKVDNGPLSH). The chain crosses the membrane as a helical span at residues 14-34 (VANSGPISIGAYCFSSIMMTV). Residues 35-48 (TNKFVVNLKGFNMN) lie on the Lumenal side of the membrane. The chain crosses the membrane as a helical span at residues 49 to 69 (FVMLFVQAAVCVNLLFFLRLL). Residues 70-81 (GYAKFRPLNRTD) lie on the Cytoplasmic side of the membrane. Residues 82–98 (AKNWFPITIFLVLMIYT) traverse the membrane as a helical segment. Residues 99–104 (SSKSLQ) are Lumenal-facing. The helical transmembrane segment at 105-124 (YLAVPIYTIFKNLTIILIAY) threads the bilayer. Over 125–138 (GEVLFFGGSVTAME) the chain is Cytoplasmic. Residues 139 to 155 (LSSFLLMVLSSVVATLG) traverse the membrane as a helical segment. At 156–170 (DQQALKKTADAGASL) the chain is on the lumenal side. A helical membrane pass occupies residues 171 to 191 (FNIGYMWMFINCLSSAAFVLV). Topologically, residues 192 to 203 (MRKRIKLTNFKD) are cytoplasmic. A helical transmembrane segment spans residues 204–224 (FDTMFYNNILSMPVLLALSFL). Residues 225–241 (MEDWSTENLTKNLSRDS) lie on the Lumenal side of the membrane. A helical membrane pass occupies residues 242-262 (VTAMIISGMTAVCISYCSGWC). Topologically, residues 263 to 269 (VRVTSST) are cytoplasmic. The chain crosses the membrane as a helical span at residues 270–290 (TYSMVGALNKLPIALSGLIFF). At 291-294 (DAPK) the chain is on the lumenal side. Residues 295–315 (NFLSIFSIFLGFLSGIVYAVA) traverse the membrane as a helical segment. Residues 316–330 (KQKKQQNPQPSAPIK) lie on the Cytoplasmic side of the membrane.

It belongs to the TPT transporter family. SLC35D subfamily. In terms of assembly, homooligomer.

It is found in the golgi apparatus membrane. The protein localises to the cytoplasmic vesicle membrane. The protein resides in the endoplasmic reticulum membrane. Its function is as follows. Involved in the import of GDP-mannose from the cytoplasm into the Golgi lumen. This Kluyveromyces lactis (strain ATCC 8585 / CBS 2359 / DSM 70799 / NBRC 1267 / NRRL Y-1140 / WM37) (Yeast) protein is GDP-mannose transporter (VRG4).